Consider the following 485-residue polypeptide: Beta-amyrin 28-monooxygenase CYP716A378 (485 aa).

The chain crosses the membrane as a helical; Signal-anchor for type II membrane protein span at residues 3 to 23; the sequence is LFFICGLVLFSTLSLISLFLL. Asn-25 and Asn-386 each carry an N-linked (GlcNAc...) asparagine glycan. Position 426 (Cys-426) interacts with heme.

This sequence belongs to the cytochrome P450 family. Heme is required as a cofactor. Mainly expressed in flowers and flower buds, to a lesser extent in young leaves and, at low levels, in old leaves, stems and roots.

The protein localises to the membrane. The catalysed reaction is beta-amyrin + 3 reduced [NADPH--hemoprotein reductase] + 3 O2 = oleanolate + 3 oxidized [NADPH--hemoprotein reductase] + 4 H2O + 4 H(+). It functions in the pathway secondary metabolite biosynthesis; terpenoid biosynthesis. Component of the oleanane-type triterpene saponins (e.g. saponarioside A and saponarioside B) biosynthetic pathway, leading to the production of natural products with detergent properties used as traditional sources of soap. An oxidoreductase that facilitates the oxidation of the methyl group to a carboxyl group at the C-28 position of beta-amyrin, resulting in the formation of oleanolate. In Saponaria officinalis (Common soapwort), this protein is Beta-amyrin 28-monooxygenase CYP716A378.